The chain runs to 300 residues: 4-hydroxy-tetrahydrodipicolinate synthase (300 aa).

T57 is a pyruvate binding site. The active-site Proton donor/acceptor is Y145. Catalysis depends on K173, which acts as the Schiff-base intermediate with substrate. I213 is a binding site for pyruvate.

The protein belongs to the DapA family. In terms of assembly, homotetramer; dimer of dimers.

The protein resides in the cytoplasm. It carries out the reaction L-aspartate 4-semialdehyde + pyruvate = (2S,4S)-4-hydroxy-2,3,4,5-tetrahydrodipicolinate + H2O + H(+). The protein operates within amino-acid biosynthesis; L-lysine biosynthesis via DAP pathway; (S)-tetrahydrodipicolinate from L-aspartate: step 3/4. In terms of biological role, catalyzes the condensation of (S)-aspartate-beta-semialdehyde [(S)-ASA] and pyruvate to 4-hydroxy-tetrahydrodipicolinate (HTPA). The chain is 4-hydroxy-tetrahydrodipicolinate synthase from Corynebacterium jeikeium (strain K411).